A 299-amino-acid polypeptide reads, in one-letter code: Cancer/testis antigen family 47 member B1 (299 aa).

A compositionally biased stretch (basic and acidic residues) spans M1–T10. Disordered stretches follow at residues M1–E102 and A215–T299. 2 stretches are compositionally biased toward low complexity: residues Q20–G31 and V46–G60. Positions A81–N101 are enriched in acidic residues. Residues A215–E238 show a composition bias toward basic and acidic residues. Composition is skewed to acidic residues over residues E239–S251 and W268–K281. The stretch at E270 to G298 forms a coiled coil. Over residues E282 to V293 the composition is skewed to basic and acidic residues.

It belongs to the CT47 family.

The polypeptide is Cancer/testis antigen family 47 member B1 (Homo sapiens (Human)).